The chain runs to 246 residues: Fasciclin-like arabinogalactan protein 11 (246 aa).

Positions 1–24 (MATSRTFIFSNLFIFFLVIATTYG) are cleaved as a signal peptide. Residues 34-179 (PTNITAILEK…LAVYQVDQVL (146 aa)) enclose the FAS1 domain. Asparagine 36, asparagine 68, asparagine 141, and asparagine 150 each carry an N-linked (GlcNAc...) asparagine glycan. Positions 193 to 222 (PAPEKGGSVSKGSASGGDDGGDSTDSSDAE) are disordered. A lipid anchor (GPI-anchor amidated serine) is attached at serine 219. Residues 220–246 (DAERTGFGFGIRITTVAAIAASSSLWI) constitute a propeptide, removed in mature form.

It belongs to the fasciclin-like AGP family. As to expression, expressed in the sclerenchyma cells of inflorescence stems and siliques.

It localises to the cell membrane. Functionally, may be a cell surface adhesion protein. The protein is Fasciclin-like arabinogalactan protein 11 (FLA11) of Arabidopsis thaliana (Mouse-ear cress).